Reading from the N-terminus, the 196-residue chain is Adenylate kinase (196 aa).

Residue 10–15 coordinates ATP; that stretch reads GAGKGT. Residues 30–59 form an NMP region; it reads STGDMLRAAVSAGTEIGKRAKAVMDAGGLV. AMP-binding positions include T31, R36, 57 to 59, 85 to 88, and Q92; these read GLV and GYPR. An LID region spans residues 126-142; the sequence is NRVAETIAAGGTVRSDD. Position 127 (R127) interacts with ATP. 2 residues coordinate AMP: R139 and R150. A178 is an ATP binding site.

The protein belongs to the adenylate kinase family. Monomer.

The protein resides in the cytoplasm. It carries out the reaction AMP + ATP = 2 ADP. Its pathway is purine metabolism; AMP biosynthesis via salvage pathway; AMP from ADP: step 1/1. In terms of biological role, catalyzes the reversible transfer of the terminal phosphate group between ATP and AMP. Plays an important role in cellular energy homeostasis and in adenine nucleotide metabolism. This is Adenylate kinase from Agrobacterium fabrum (strain C58 / ATCC 33970) (Agrobacterium tumefaciens (strain C58)).